Here is a 358-residue protein sequence, read N- to C-terminus: Na(+)/H(+) exchange regulatory cofactor NHE-RF1 (358 aa).

Serine 2 bears the N-acetylserine mark. Serine 2 and serine 46 each carry phosphoserine. In terms of domain architecture, PDZ 1 spans 14-94 (LCCLEKGPNG…AVRLLVVDPE (81 aa)). The segment covering 114–134 (QETPGQAEPAAAAEAQGAGNE) has biased composition (low complexity). Disordered regions lie at residues 114–192 (QETP…EASG) and 269–358 (SREA…FSNL). Positions 135 to 149 (NEPREADKSHPEQRK) are enriched in basic and acidic residues. Positions 154–234 (LCTMKKGPSG…ETKLLVVDRE (81 aa)) constitute a PDZ 2 domain. Serine 162, serine 269, serine 280, serine 290, and serine 291 each carry phosphoserine. Over residues 287–306 (RSASSDTSEELNSQDSPPKQ) the composition is skewed to polar residues. The residue at position 293 (threonine 293) is a Phosphothreonine. 3 positions are modified to phosphoserine: serine 294, serine 299, and serine 302. Low complexity predominate over residues 307–319 (DSTAPSSTSSSDP). Basic and acidic residues predominate over residues 348–358 (WSKKNELFSNL).

In terms of assembly, homodimer, and heterodimer with NHERF2. Binds the N-termini of EZR, RDX and MSN. Binds the C-termini of PDGFRA, PDGFRB, ADRB2, NOS2 and CFTR. Binds ARHGAP17, EPI64, RACK1, OPRK1, GNAQ, CTNNB1 and PLCB3. Binds PDZK1. Interacts with CLCN3. Binds the C-terminus of PAG1. In resting T-cells, part of a PAG1-NHERF1-MSN complex which is disrupted upon TCR activation. Forms a complex with CFTR and SLC4A7. Forms a complex with SLC4A7 and ATP6V1B1. Interacts with TRPC4 (via the PDZ-binding domain). Directly interacts with HTR4. Interacts (via the PDZ 1 domain) with PODXL (via the C-terminal PDZ-binding motif DTHL); interaction is not detected in glomerular epithelium cells. Interacts (via the PDZ 1 domain) with PODXL (via the C-terminal PDZ-binding motif DTHL); the interaction take place early in the secretory pathway and is necessary for its apical membrane sorting. Interacts with SLC26A3. Interacts with MCC. Interacts with SLC34A1. Interacts (via the PDZ domains) with SLC26A6 isoform 4 and isoform 5. Interacts (via PDZ domains) with ACE2 (via PDZ-binding motif); the interaction may enhance ACE2 membrane residence. Post-translationally, phosphorylated on serine residues.

The protein resides in the cytoplasm. It localises to the apical cell membrane. Its subcellular location is the endomembrane system. The protein localises to the cell projection. It is found in the filopodium. The protein resides in the ruffle. It localises to the microvillus. In terms of biological role, scaffold protein that connects plasma membrane proteins with members of the ezrin/moesin/radixin family and thereby helps to link them to the actin cytoskeleton and to regulate their surface expression. Necessary for recycling of internalized ADRB2. Was first known to play a role in the regulation of the activity and subcellular location of SLC9A3. Necessary for cAMP-mediated phosphorylation and inhibition of SLC9A3. Involved in sperm capacitation. May participate in the regulation of the chloride and bicarbonate homeostasis in spermatozoa. May enhance Wnt signaling. May participate in HTR4 targeting to microvilli. Involved in the regulation of phosphate reabsorption in the renal proximal tubules. The protein is Na(+)/H(+) exchange regulatory cofactor NHE-RF1 (NHERF1) of Macaca fascicularis (Crab-eating macaque).